The following is a 315-amino-acid chain: Malate dehydrogenase (315 aa).

9-15 contributes to the NAD(+) binding site; the sequence is GGSGNVG. Substrate is bound by residues Arg84 and Arg90. Residues Asn97 and 120 to 122 each bind NAD(+); that span reads VSN. Substrate contacts are provided by Asn122 and Arg153. His177 serves as the catalytic Proton acceptor.

Belongs to the LDH/MDH superfamily.

It catalyses the reaction (S)-malate + NAD(+) = oxaloacetate + NADH + H(+). Functionally, catalyzes the reversible oxidation of malate to oxaloacetate. In Helicobacter hepaticus (strain ATCC 51449 / 3B1), this protein is Malate dehydrogenase.